We begin with the raw amino-acid sequence, 145 residues long: Cytochrome c-type biogenesis protein CcmE (145 aa).

Residues methionine 1–arginine 7 are Cytoplasmic-facing. Residues leucine 8–alanine 28 traverse the membrane as a helical; Signal-anchor for type II membrane protein segment. At leucine 29 to glycine 145 the chain is on the periplasmic side. Residues histidine 123 and tyrosine 127 each coordinate heme.

It belongs to the CcmE/CycJ family.

The protein localises to the cell inner membrane. Its function is as follows. Heme chaperone required for the biogenesis of c-type cytochromes. Transiently binds heme delivered by CcmC and transfers the heme to apo-cytochromes in a process facilitated by CcmF and CcmH. The sequence is that of Cytochrome c-type biogenesis protein CcmE from Sphingopyxis alaskensis (strain DSM 13593 / LMG 18877 / RB2256) (Sphingomonas alaskensis).